Reading from the N-terminus, the 126-residue chain is MKLIQLCILFWCWRAICCQGCELTNITIAVEKEECRFCISINTTWCAGYCYTRDLVYKDPARPNTQKICTFKELVYETIRLPGCAHHSDSFYTYPVATECHCGKCDSDSTDCTVRGLGPSYCSFGE.

A signal peptide spans Met-1–Gln-19. Cystine bridges form between Cys-21-Cys-69, Cys-35-Cys-84, Cys-38-Cys-122, Cys-46-Cys-100, Cys-50-Cys-102, and Cys-105-Cys-112. Asn-25 and Asn-42 each carry an N-linked (GlcNAc...) asparagine glycan.

It belongs to the glycoprotein hormones subunit beta family. As to quaternary structure, heterodimer. The active follitropin is a heterodimer composed of an alpha chain/CGA shared with other hormones and a unique beta chain/FSHB shown here.

The protein localises to the secreted. Together with the alpha chain CGA constitutes follitropin, the follicle-stimulating hormone, and provides its biological specificity to the hormone heterodimer. Binds FSHR, a G protein-coupled receptor, on target cells to activate downstream signaling pathways. Follitropin is involved in follicle development and spermatogenesis in reproductive organs. In Phodopus sungorus (Striped hairy-footed hamster), this protein is Follitropin subunit beta (FSHB).